A 280-amino-acid polypeptide reads, in one-letter code: Thymidylate synthase (280 aa).

Residue Arg-21 coordinates dUMP. (6R)-5,10-methylene-5,6,7,8-tetrahydrofolate is bound at residue His-51. 142–143 (RR) contributes to the dUMP binding site. Cys-162 functions as the Nucleophile in the catalytic mechanism. DUMP-binding positions include 182 to 185 (RSAD), Asn-193, and 223 to 225 (HLY). Asp-185 lines the (6R)-5,10-methylene-5,6,7,8-tetrahydrofolate pocket. Ala-279 is a binding site for (6R)-5,10-methylene-5,6,7,8-tetrahydrofolate.

It belongs to the thymidylate synthase family. Bacterial-type ThyA subfamily. As to quaternary structure, homodimer.

Its subcellular location is the cytoplasm. The enzyme catalyses dUMP + (6R)-5,10-methylene-5,6,7,8-tetrahydrofolate = 7,8-dihydrofolate + dTMP. It functions in the pathway pyrimidine metabolism; dTTP biosynthesis. In terms of biological role, catalyzes the reductive methylation of 2'-deoxyuridine-5'-monophosphate (dUMP) to 2'-deoxythymidine-5'-monophosphate (dTMP) while utilizing 5,10-methylenetetrahydrofolate (mTHF) as the methyl donor and reductant in the reaction, yielding dihydrofolate (DHF) as a by-product. This enzymatic reaction provides an intracellular de novo source of dTMP, an essential precursor for DNA biosynthesis. The protein is Thymidylate synthase of Acinetobacter baylyi (strain ATCC 33305 / BD413 / ADP1).